The following is a 505-amino-acid chain: MPTNAGTSLSSYKHIVAIGTTVKSESLESAAYEIPRKRKMRSDSAAVSGNSVSTPKKLKSHLPSSVPNPGMSEKEVVEDSNEILRYPVNLAVSDCLGTKSKWSPRDEEQMRAVKEALHVSKAPSTILCREDEQIRIFEFVKGCIDQQKAGSLYICGCPGTGKSLSMEKVVQQVGDWSTQAGLPPVDTLSVNCTSLSKTTDIFSKILGEIKPGKNANTNSSPLQHLQNLFSQKQESSSSRMMLIIADEMDYLITKDRGVLYDLFMLTTLPFSRCILIGVANAIDLADRFLPKLKSLNCKPMVITFRAYSKDQILRILQERLRVLSYVAFQPKALELCARKVAAASGDMRKALCVCRSALEILEIETRGSTGPESQGPTPDDSVVRMDHMAAALSKTFKSPVVETIQSLPQHQQIIICAAAKAFRGSKKDATVGELNKLYLEICKSWMISPAGITEFTNMCTVLNDQGILKVGQARRDKLKRVSLRVDESDITFALQEIRFFRNCLL.

Residues 37–72 (KRKMRSDSAAVSGNSVSTPKKLKSHLPSSVPNPGMS) form a disordered region. Residues 45-54 (AAVSGNSVST) are compositionally biased toward polar residues.

This sequence belongs to the CDC6/cdc18 family.

It is found in the nucleus. Functionally, may be involved in the initiation of DNA replication. The polypeptide is Cell division control protein 6 homolog B (Arabidopsis thaliana (Mouse-ear cress)).